Reading from the N-terminus, the 225-residue chain is UPF0758 protein BCB4264_A4572 (225 aa).

The MPN domain occupies 103–225; it reads SIRSPEDCAK…FVSLKEKGHI (123 aa). Residues His-174, His-176, and Asp-187 each coordinate Zn(2+). Positions 174 to 187 match the JAMM motif motif; that stretch reads HNHPSGDPTPSRED.

This sequence belongs to the UPF0758 family.

The sequence is that of UPF0758 protein BCB4264_A4572 from Bacillus cereus (strain B4264).